Reading from the N-terminus, the 297-residue chain is Formamidopyrimidine-DNA glycosylase (297 aa).

P2 functions as the Schiff-base intermediate with DNA in the catalytic mechanism. E3 (proton donor) is an active-site residue. Catalysis depends on K58, which acts as the Proton donor; for beta-elimination activity. DNA-binding residues include H106, R125, and R168. Residues R259 to P295 form an FPG-type zinc finger. R285 (proton donor; for delta-elimination activity) is an active-site residue.

This sequence belongs to the FPG family. Monomer. Zn(2+) is required as a cofactor.

It catalyses the reaction Hydrolysis of DNA containing ring-opened 7-methylguanine residues, releasing 2,6-diamino-4-hydroxy-5-(N-methyl)formamidopyrimidine.. The catalysed reaction is 2'-deoxyribonucleotide-(2'-deoxyribose 5'-phosphate)-2'-deoxyribonucleotide-DNA = a 3'-end 2'-deoxyribonucleotide-(2,3-dehydro-2,3-deoxyribose 5'-phosphate)-DNA + a 5'-end 5'-phospho-2'-deoxyribonucleoside-DNA + H(+). In terms of biological role, involved in base excision repair of DNA damaged by oxidation or by mutagenic agents. Acts as a DNA glycosylase that recognizes and removes damaged bases. Has a preference for oxidized purines, such as 7,8-dihydro-8-oxoguanine (8-oxoG). Has AP (apurinic/apyrimidinic) lyase activity and introduces nicks in the DNA strand. Cleaves the DNA backbone by beta-delta elimination to generate a single-strand break at the site of the removed base with both 3'- and 5'-phosphates. In Methylobacterium nodulans (strain LMG 21967 / CNCM I-2342 / ORS 2060), this protein is Formamidopyrimidine-DNA glycosylase.